A 219-amino-acid polypeptide reads, in one-letter code: Histone H1.4 (219 aa).

The span at M1 to A15 shows a compositional bias: low complexity. The segment at M1–S41 is disordered. S2 carries the N-acetylserine modification. S2 bears the Phosphoserine mark. Residue K17 is modified to N6-acetyllysine. Phosphothreonine is present on T18. Residues I20 to A35 are compositionally biased toward basic residues. Position 26 is an N6-acetyllysine; alternate (K26). Residue K26 is modified to N6-methyllysine; alternate. K34 carries the post-translational modification N6-(beta-hydroxybutyryl)lysine; alternate. K34 carries the post-translational modification N6-succinyllysine; alternate. Phosphoserine is present on S36. An H15 domain is found at S36 to K109. The residue at position 52 (K52) is an N6-(beta-hydroxybutyryl)lysine. Residue R54 is modified to Citrulline. Residues K64, K85, K90, and K106 each carry the N6-(beta-hydroxybutyryl)lysine modification. Residues T92–K219 form a disordered region. The segment covering K119 to K140 has biased composition (basic residues). At T146 the chain carries Phosphothreonine. Basic residues-rich tracts occupy residues K149–K160 and K168–P185. Position 150 is an ADP-ribosylserine (S150). Phosphoserine is present on S187. A compositionally biased stretch (basic residues) spans R192 to K219.

Belongs to the histone H1/H5 family. Post-translationally, H1 histones are progressively phosphorylated during the cell cycle, becoming maximally phosphorylated during late G2 phase and M phase, and being dephosphorylated sharply thereafter. Acetylated at Lys-26. Deacetylated at Lys-26 by SIRT1. In terms of processing, citrullination at Arg-54 (H1R54ci) by PADI4 takes place within the DNA-binding site of H1 and results in its displacement from chromatin and global chromatin decondensation, thereby promoting pluripotency and stem cell maintenance. Post-translationally, ADP-ribosylated on Ser-150 in response to DNA damage.

The protein resides in the nucleus. It is found in the chromosome. Functionally, histone H1 protein binds to linker DNA between nucleosomes forming the macromolecular structure known as the chromatin fiber. Histones H1 are necessary for the condensation of nucleosome chains into higher-order structured fibers. Also acts as a regulator of individual gene transcription through chromatin remodeling, nucleosome spacing and DNA methylation. The protein is Histone H1.4 of Rattus norvegicus (Rat).